The following is a 149-amino-acid chain: 3-dehydroquinate dehydratase (149 aa).

The Proton acceptor role is filled by Y26. 3 residues coordinate substrate: N78, H84, and D91. The active-site Proton donor is H104. Residues 105-106 and R115 each bind substrate; that span reads LS.

Belongs to the type-II 3-dehydroquinase family. In terms of assembly, homododecamer.

It catalyses the reaction 3-dehydroquinate = 3-dehydroshikimate + H2O. It participates in metabolic intermediate biosynthesis; chorismate biosynthesis; chorismate from D-erythrose 4-phosphate and phosphoenolpyruvate: step 3/7. In terms of biological role, catalyzes a trans-dehydration via an enolate intermediate. The protein is 3-dehydroquinate dehydratase of Polynucleobacter necessarius subsp. necessarius (strain STIR1).